Reading from the N-terminus, the 147-residue chain is Hemoglobin subunit beta (147 aa).

An N-acetylvaline modification is found at Val2. The Globin domain occupies 3 to 147; that stretch reads HLTGEEKAAV…VANALAHKYH (145 aa). Thr13 bears the Phosphothreonine mark. Residue Ser45 is modified to Phosphoserine. Position 60 is an N6-acetyllysine (Lys60). Residue His64 participates in heme b binding. An N6-acetyllysine modification is found at Lys83. His93 serves as a coordination point for heme b. Cys94 is modified (S-nitrosocysteine). Lys145 bears the N6-acetyllysine mark.

This sequence belongs to the globin family. As to quaternary structure, heterotetramer of two alpha chains and two beta chains. Red blood cells.

In terms of biological role, involved in oxygen transport from the lung to the various peripheral tissues. The chain is Hemoglobin subunit beta (HBB) from Lagothrix lagotricha (Brown woolly monkey).